We begin with the raw amino-acid sequence, 494 residues long: UDP-N-acetylmuramoyl-L-alanyl-D-glutamate--L-lysine ligase (494 aa).

Residue Ser30 coordinates UDP-N-acetyl-alpha-D-muramoyl-L-alanyl-D-glutamate. 110–116 serves as a coordination point for ATP; the sequence is GTNGKTS. Residues 152-153, Ser179, and Arg187 each bind UDP-N-acetyl-alpha-D-muramoyl-L-alanyl-D-glutamate; that span reads TT. An N6-carboxylysine modification is found at Lys219. Residues 406-409 carry the L-lysine recognition motif motif; sequence DNPA.

It belongs to the MurCDEF family. MurE subfamily. Carboxylation is probably crucial for Mg(2+) binding and, consequently, for the gamma-phosphate positioning of ATP.

The protein resides in the cytoplasm. It catalyses the reaction UDP-N-acetyl-alpha-D-muramoyl-L-alanyl-D-glutamate + L-lysine + ATP = UDP-N-acetyl-alpha-D-muramoyl-L-alanyl-gamma-D-glutamyl-L-lysine + ADP + phosphate + H(+). The protein operates within cell wall biogenesis; peptidoglycan biosynthesis. Its function is as follows. Catalyzes the addition of L-lysine to the nucleotide precursor UDP-N-acetylmuramoyl-L-alanyl-D-glutamate (UMAG) in the biosynthesis of bacterial cell-wall peptidoglycan. The chain is UDP-N-acetylmuramoyl-L-alanyl-D-glutamate--L-lysine ligase from Staphylococcus aureus (strain bovine RF122 / ET3-1).